A 193-amino-acid chain; its full sequence is 7-methyl-GTP pyrophosphatase (193 aa).

The Proton acceptor role is filled by Asp68.

Belongs to the Maf family. YceF subfamily. The cofactor is a divalent metal cation.

The protein localises to the cytoplasm. The catalysed reaction is N(7)-methyl-GTP + H2O = N(7)-methyl-GMP + diphosphate + H(+). Functionally, nucleoside triphosphate pyrophosphatase that hydrolyzes 7-methyl-GTP (m(7)GTP). May have a dual role in cell division arrest and in preventing the incorporation of modified nucleotides into cellular nucleic acids. This Chromobacterium violaceum (strain ATCC 12472 / DSM 30191 / JCM 1249 / CCUG 213 / NBRC 12614 / NCIMB 9131 / NCTC 9757 / MK) protein is 7-methyl-GTP pyrophosphatase.